Reading from the N-terminus, the 511-residue chain is ATP synthase subunit alpha, mitochondrial (511 aa).

Position 171–178 (171–178 (GDRQTGKT)) interacts with ATP.

This sequence belongs to the ATPase alpha/beta chains family. In terms of assembly, F-type ATPases have 2 components, CF(1) - the catalytic core - and CF(0) - the membrane proton channel. CF(1) has five subunits: alpha(3), beta(3), gamma(1), delta(1), epsilon(1). CF(0) has three main subunits: a, b and c.

The protein localises to the mitochondrion. The protein resides in the mitochondrion inner membrane. Its function is as follows. Mitochondrial membrane ATP synthase (F(1)F(0) ATP synthase or Complex V) produces ATP from ADP in the presence of a proton gradient across the membrane which is generated by electron transport complexes of the respiratory chain. F-type ATPases consist of two structural domains, F(1) - containing the extramembraneous catalytic core, and F(0) - containing the membrane proton channel, linked together by a central stalk and a peripheral stalk. During catalysis, ATP synthesis in the catalytic domain of F(1) is coupled via a rotary mechanism of the central stalk subunits to proton translocation. Subunits alpha and beta form the catalytic core in F(1). Rotation of the central stalk against the surrounding alpha(3)beta(3) subunits leads to hydrolysis of ATP in three separate catalytic sites on the beta subunits. Subunit alpha does not bear the catalytic high-affinity ATP-binding sites. This chain is ATP synthase subunit alpha, mitochondrial (ATPA), found in Oenothera biennis (German evening primrose).